The following is a 343-amino-acid chain: S-adenosylmethionine:tRNA ribosyltransferase-isomerase (343 aa).

The protein belongs to the QueA family. Monomer.

It is found in the cytoplasm. It catalyses the reaction 7-aminomethyl-7-carbaguanosine(34) in tRNA + S-adenosyl-L-methionine = epoxyqueuosine(34) in tRNA + adenine + L-methionine + 2 H(+). It participates in tRNA modification; tRNA-queuosine biosynthesis. In terms of biological role, transfers and isomerizes the ribose moiety from AdoMet to the 7-aminomethyl group of 7-deazaguanine (preQ1-tRNA) to give epoxyqueuosine (oQ-tRNA). The protein is S-adenosylmethionine:tRNA ribosyltransferase-isomerase of Syntrophotalea carbinolica (strain DSM 2380 / NBRC 103641 / GraBd1) (Pelobacter carbinolicus).